The sequence spans 396 residues: Ribosomal RNA large subunit methyltransferase I (396 aa).

The 80-residue stretch at 2–81 (SVRLVLAKGR…ESIDIAFFTR (80 aa)) folds into the PUA domain.

This sequence belongs to the methyltransferase superfamily. RlmI family.

Its subcellular location is the cytoplasm. The enzyme catalyses cytidine(1962) in 23S rRNA + S-adenosyl-L-methionine = 5-methylcytidine(1962) in 23S rRNA + S-adenosyl-L-homocysteine + H(+). In terms of biological role, specifically methylates the cytosine at position 1962 (m5C1962) of 23S rRNA. This chain is Ribosomal RNA large subunit methyltransferase I, found in Escherichia coli (strain SMS-3-5 / SECEC).